The sequence spans 772 residues: MGKRRNRGRSQMLSTMTKKQKKHLRDFGEEHPFYDRVSKKEAKPQICQLPESSDSSHSESESESEQEHVSGYHRLLATLKNVSEEEEEEEEEEEEEEEEEEEEEEEEEDDSAVGDAEMNEEAGSEDGSVGEAAVSEAAEEAAETQEHMSLADNSKEKDGEEPPGVSQKSSEEFTDVKHESLFSLETNFLEEDSGGSCSQRPSQDPFQQHVNKELKEKEIQAAASSPPATQQLKWPVLGHLVFSSKFQKTETFKPPKDIDLKLLHLQKPLESTWAKTNSQFLSGPQKSNSSFTPLQKELFLIMNSYRDLFYPERTALKNGEEVRHVYCLHAINHVLKANAQVLANNSRRRSQKLGVGEDDDFRDQGLTRPKVLIVVPFREAALRVVQLFISLLEGDSKKKIIVSNKKRFQGEYGSDPEERPPNLKRPEDYEAVFVGNIDDHFRIGVAILQRSIRLYAPFYSSDILIASPLGLRTIIGGEGEKKRDFDFLSSVELLIIDQADIYLMQNWEHVLHLMNHMNLLPLDSHGVDFSRVRMWSLNNWSKYYRQTLLFGALQDAQINSVFNKHCINAQGQVAVRNVPMTGSISHVLVQLPHVFQRMEAQDLSSVIDARFHFFINKILPQYRDAVMSHTLIYVPSYFDFVRLRNYFKKEELNFTHICEYTQKSGISRARHFFLQGEKQFLLLTERFHFYKRYTIKGIRNLIFYELPTYPHFYSEVCNMLRATSRGEEATWTCTVLYSKYDAQRLAAVVGVERAAQMLQSPKNVHLFVTGEK.

The interval 1-179 (MGKRRNRGRS…SEEFTDVKHE (179 aa)) is disordered. Promotes p53/TP53 degradation regions lie at residues 1–201 (MGKR…SQRP) and 589–651 (VQLP…KKEE). Serine 10 carries the post-translational modification Phosphoserine. Over residues 25 to 43 (RDFGEEHPFYDRVSKKEAK) the composition is skewed to basic and acidic residues. A phosphoserine mark is found at serine 52, serine 60, and serine 64. The segment covering 54 to 70 (DSSHSESESESEQEHVS) has biased composition (basic and acidic residues). Residues 84-124 (EEEEEEEEEEEEEEEEEEEEEEEEEDDSAVGDAEMNEEAGS) are compositionally biased toward acidic residues. Residues 127–136 (GSVGEAAVSE) are compositionally biased toward low complexity. The span at 169–179 (SSEEFTDVKHE) shows a compositional bias: basic and acidic residues. Residues 652–713 (LNFTHICEYT…YELPTYPHFY (62 aa)) are represses p53/TP53 degradation.

It belongs to the UTP25 family. As to quaternary structure, interacts with CAPN3; the interaction is required for CAPN3 translocation to the nucleolus. Phosphorylated. Phosphorylation is required to promote p53/TP53 degradation in the nucleolus which promotes cell cycle progression and liver development. As to expression, expressed in all tissues tested: brain, small intestine, large intestine, stomach, liver, spleen, thymus, lung, kidney and testes (at protein level).

Its subcellular location is the nucleus. It localises to the nucleolus. Functionally, component of the ribosomal small subunit processome for the biogenesis of ribosomes, functions in pre-ribosomal RNA (pre-rRNA) processing. Essential for embryonic development in part through the regulation of p53 pathway. Controls the expansion growth of digestive organs and liver. Also involved in the sympathetic neuronal development. Mediates, with CAPN3, the proteasome-independent degradation of p53/TP53. In Mus musculus (Mouse), this protein is U3 small nucleolar RNA-associated protein 25 homolog.